A 136-amino-acid chain; its full sequence is uncharacterized protein (136 aa).

A helical membrane pass occupies residues 40–62 (LFYSISLCVSLLLHISLCVSVYV).

Its subcellular location is the membrane. This is an uncharacterized protein from Homo sapiens (Human).